The sequence spans 364 residues: Chorismate synthase (364 aa).

Residue arginine 48 participates in NADP(+) binding. Residues 131–133, 243–244, glycine 288, 303–307, and arginine 329 each bind FMN; these read RSS, NA, and KPTSS.

Belongs to the chorismate synthase family. Homotetramer. The cofactor is FMNH2.

The enzyme catalyses 5-O-(1-carboxyvinyl)-3-phosphoshikimate = chorismate + phosphate. Its pathway is metabolic intermediate biosynthesis; chorismate biosynthesis; chorismate from D-erythrose 4-phosphate and phosphoenolpyruvate: step 7/7. In terms of biological role, catalyzes the anti-1,4-elimination of the C-3 phosphate and the C-6 proR hydrogen from 5-enolpyruvylshikimate-3-phosphate (EPSP) to yield chorismate, which is the branch point compound that serves as the starting substrate for the three terminal pathways of aromatic amino acid biosynthesis. This reaction introduces a second double bond into the aromatic ring system. This Brucella melitensis biotype 2 (strain ATCC 23457) protein is Chorismate synthase.